Consider the following 132-residue polypeptide: ER membrane protein complex subunit 5 (132 aa).

Topologically, residues 1-3 (MAS) are cytoplasmic. The chain crosses the membrane as a helical span at residues 4–22 (SIWKGLVGIGLFALAHAAF). Residues 23 to 43 (SAAQHRSYMRLTEKEDETLPI) are Lumenal-facing. Residues 44–63 (DIVLQTLLAFIVACYGIVHI) traverse the membrane as a helical segment. At 64–132 (AGEFKDMDAT…KLSKLESMHR (69 aa)) the chain is on the cytoplasmic side.

The protein belongs to the membrane magnesium transporter (TC 1.A.67) family. In terms of assembly, component of the ER membrane protein complex (EMC).

The protein resides in the endoplasmic reticulum membrane. Its subcellular location is the golgi apparatus membrane. It localises to the early endosome membrane. In terms of biological role, part of the endoplasmic reticulum membrane protein complex (EMC) that enables the energy-independent insertion into endoplasmic reticulum membranes of newly synthesized membrane proteins. Preferentially accommodates proteins with transmembrane domains that are weakly hydrophobic or contain destabilizing features such as charged and aromatic residues. Involved in the cotranslational insertion of multi-pass membrane proteins in which stop-transfer membrane-anchor sequences become ER membrane spanning helices. It is also required for the post-translational insertion of tail-anchored/TA proteins in endoplasmic reticulum membranes. By mediating the proper cotranslational insertion of N-terminal transmembrane domains in an N-exo topology, with translocated N-terminus in the lumen of the ER, controls the topology of multi-pass membrane proteins like the G protein-coupled receptors. By regulating the insertion of various proteins in membranes, it is indirectly involved in many cellular processes. May be involved in Mg(2+) transport. In Xenopus tropicalis (Western clawed frog), this protein is ER membrane protein complex subunit 5.